The sequence spans 337 residues: Eukaryotic translation initiation factor 3 subunit H (337 aa).

In terms of domain architecture, MPN spans 21–153 (VQCDGLAVMK…LKAYRLTPQA (133 aa)).

The protein belongs to the eIF-3 subunit H family. As to quaternary structure, component of the eukaryotic translation initiation factor 3 (eIF-3) complex. The eIF-3 complex interacts with pix. Interacts with mxt.

The protein resides in the cytoplasm. Its function is as follows. Component of the eukaryotic translation initiation factor 3 (eIF-3) complex, which is involved in protein synthesis of a specialized repertoire of mRNAs and, together with other initiation factors, stimulates binding of mRNA and methionyl-tRNAi to the 40S ribosome. The eIF-3 complex specifically targets and initiates translation of a subset of mRNAs involved in cell proliferation. This chain is Eukaryotic translation initiation factor 3 subunit H, found in Drosophila grimshawi (Hawaiian fruit fly).